A 230-amino-acid polypeptide reads, in one-letter code: UPF0173 metal-dependent hydrolase Mbar_A3716 (230 aa).

It belongs to the UPF0173 family.

The protein is UPF0173 metal-dependent hydrolase Mbar_A3716 of Methanosarcina barkeri (strain Fusaro / DSM 804).